The sequence spans 309 residues: Tumor necrosis factor ligand superfamily member 9 (309 aa).

The segment covering 1–16 (MDQHTLDVEDTADARH) has biased composition (basic and acidic residues). Residues 1-20 (MDQHTLDVEDTADARHPAGT) form a disordered region. The Cytoplasmic portion of the chain corresponds to 1–82 (MDQHTLDVED…ALNFCSRHPK (82 aa)). The helical; Signal-anchor for type II membrane protein transmembrane segment at 83–103 (LYGLVALVLLLLIAACVPIFT) threads the bilayer. Residues 104-309 (RTEPRPALTI…FLVKPDNPWE (206 aa)) are Extracellular-facing. N-linked (GlcNAc...) asparagine glycans are attached at residues Asn-139, Asn-161, and Asn-293. The THD domain maps to 147-302 (VFAKLLAKNQ…NTTSFGLFLV (156 aa)).

The protein belongs to the tumor necrosis factor family. As to quaternary structure, homotrimer.

The protein localises to the membrane. Functionally, cytokine that binds to TNFRSF9. Induces the proliferation of activated peripheral blood T-cells. May have a role in activation-induced cell death (AICD). May play a role in cognate interactions between T-cells and B-cells/macrophages. In Mus musculus (Mouse), this protein is Tumor necrosis factor ligand superfamily member 9 (Tnfsf9).